A 149-amino-acid polypeptide reads, in one-letter code: UPF0260 protein PFLU_1520 (149 aa).

This sequence belongs to the UPF0260 family.

The chain is UPF0260 protein PFLU_1520 from Pseudomonas fluorescens (strain SBW25).